The following is a 267-amino-acid chain: NAD kinase (267 aa).

Residue Asp52 is the Proton acceptor of the active site. Residues 52-53, Arg57, 121-122, Arg132, Lys150, Asp152, 163-168, and Ala187 each bind NAD(+); these read DG, NE, and TAYSLS.

Belongs to the NAD kinase family. A divalent metal cation is required as a cofactor.

The protein resides in the cytoplasm. The enzyme catalyses NAD(+) + ATP = ADP + NADP(+) + H(+). In terms of biological role, involved in the regulation of the intracellular balance of NAD and NADP, and is a key enzyme in the biosynthesis of NADP. Catalyzes specifically the phosphorylation on 2'-hydroxyl of the adenosine moiety of NAD to yield NADP. The protein is NAD kinase of Fusobacterium nucleatum subsp. nucleatum (strain ATCC 25586 / DSM 15643 / BCRC 10681 / CIP 101130 / JCM 8532 / KCTC 2640 / LMG 13131 / VPI 4355).